The primary structure comprises 92 residues: Large ribosomal subunit protein eL43 (92 aa).

Residues 39-60 form a C4-type zinc finger; sequence CDFCGKYGMKRKAVGIWSCKGC.

It belongs to the eukaryotic ribosomal protein eL43 family.

This chain is Large ribosomal subunit protein eL43 (RPL37a), found in Ostreococcus lucimarinus (strain CCE9901).